A 441-amino-acid chain; its full sequence is Probable acetylornithine aminotransferase, mitochondrial (441 aa).

N6-(pyridoxal phosphate)lysine is present on Lys-294.

The protein belongs to the class-III pyridoxal-phosphate-dependent aminotransferase family. Pyridoxal 5'-phosphate is required as a cofactor.

It is found in the mitochondrion matrix. The catalysed reaction is N(2)-acetyl-L-ornithine + 2-oxoglutarate = N-acetyl-L-glutamate 5-semialdehyde + L-glutamate. It functions in the pathway amino-acid biosynthesis; L-arginine biosynthesis; N(2)-acetyl-L-ornithine from L-glutamate: step 4/4. The protein is Probable acetylornithine aminotransferase, mitochondrial (arg1) of Schizosaccharomyces pombe (strain 972 / ATCC 24843) (Fission yeast).